The sequence spans 310 residues: Pseudouridine-5'-phosphate glycosidase (310 aa).

The Proton donor role is filled by Glu-26. Lys-87 and Val-107 together coordinate substrate. Residue Asp-139 participates in Mn(2+) binding. Ser-141–Asp-143 lines the substrate pocket. Lys-160 (nucleophile) is an active-site residue.

It belongs to the pseudouridine-5'-phosphate glycosidase family. Homotrimer. Requires Mn(2+) as cofactor.

The catalysed reaction is D-ribose 5-phosphate + uracil = psi-UMP + H2O. In terms of biological role, catalyzes the reversible cleavage of pseudouridine 5'-phosphate (PsiMP) to ribose 5-phosphate and uracil. Functions biologically in the cleavage direction, as part of a pseudouridine degradation pathway. The protein is Pseudouridine-5'-phosphate glycosidase of Roseobacter denitrificans (strain ATCC 33942 / OCh 114) (Erythrobacter sp. (strain OCh 114)).